We begin with the raw amino-acid sequence, 139 residues long: Ribonuclease homolog (139 aa).

The first 23 residues, 1–23 (MAMSSLWWTAILLLALTVSMCYG), serve as a signal peptide directing secretion. His-34 serves as the catalytic Proton acceptor. 3 disulfides stabilise this stretch: Cys-49/Cys-102, Cys-64/Cys-111, and Cys-82/Cys-126. Residue 65-69 (KSFNT) participates in substrate binding. His-133 functions as the Proton donor in the catalytic mechanism.

It belongs to the pancreatic ribonuclease family.

It is found in the secreted. The sequence is that of Ribonuclease homolog from Gallus gallus (Chicken).